The primary structure comprises 280 residues: Tumor necrosis factor ligand superfamily member 6 (280 aa).

The Cytoplasmic segment spans residues 1–80 (MQQPFNYPYP…KKRGNHSTGL (80 aa)). Residues 20–70 (SSPWAPPGTVLPCPTSVPRRPGQRRPPPPPPPPPLPPPPPSPLPPLPLPPL) are disordered. Residues 43–69 (RRPPPPPPPPPLPPPPPSPLPPLPLPP) are compositionally biased toward pro residues. A helical; Signal-anchor for type II membrane protein transmembrane segment spans residues 81–101 (CLLVMFFMVLVALVGLGLGMF). Residues 102–280 (QLFHLQKELA…SQTFFGLYKL (179 aa)) are Extracellular-facing. A disordered region spans residues 117 to 155 (TSQKHTASSLEKQIGHPSPPPEKKEQRKVAHLTGKPNSR). In terms of domain architecture, THD spans 144–280 (KVAHLTGKPN…SQTFFGLYKL (137 aa)). An N-linked (GlcNAc...) asparagine glycan is attached at asparagine 183. A disulfide bridge links cysteine 201 with cysteine 232. N-linked (GlcNAc...) asparagine glycans are attached at residues asparagine 249 and asparagine 259.

It belongs to the tumor necrosis factor family. As to quaternary structure, homotrimer. Interacts with ARHGAP9, BAIAP2L1, BTK, CACNB3, CACNB4, CRK, DLG2, DNMBP, DOCK4, EPS8L3, FGR, FYB1, FYN, HCK, ITK, ITSN2, KALRN, LYN, MACC1, MIA, MPP4, MYO15A, NCF1, NCK1, NCK2, NCKIPSD, OSTF1, PIK3R1, PSTPIP1, RIMBP3C, SAMSN1, SH3GL3, SH3PXD2B, SH3PXD2A, SH3RF2, SKAP2, SNX33, SNX9, SORBS3, SPTA1, SRC, SRGAP1, SRGAP2, SRGAP3, TEC, TJP3 and YES1. Post-translationally, the soluble form derives from the membrane form by proteolytic processing. The membrane-bound form undergoes two successive intramembrane proteolytic cleavages. The first one is processed by ADAM10 producing an N-terminal fragment, which lacks the receptor-binding extracellular domain. This ADAM10-processed FasL (FasL APL) remnant form is still membrane anchored and further processed by SPPL2A that liberates the FasL intracellular domain (FasL ICD). FasL shedding by ADAM10 is a prerequisite for subsequent intramembrane cleavage by SPPL2A in T-cells. In terms of processing, phosphorylated by FGR on tyrosine residues; this is required for ubiquitination and subsequent internalization. N-glycosylated. Glycosylation enhances apoptotic activity. Post-translationally, monoubiquitinated.

It is found in the cell membrane. It localises to the cytoplasmic vesicle lumen. The protein localises to the lysosome lumen. Its subcellular location is the secreted. The protein resides in the nucleus. Its function is as follows. Cytokine that binds to TNFRSF6/FAS, a receptor that transduces the apoptotic signal into cells. Involved in cytotoxic T-cell-mediated apoptosis, natural killer cell-mediated apoptosis and in T-cell development. Initiates fratricidal/suicidal activation-induced cell death (AICD) in antigen-activated T-cells contributing to the termination of immune responses. TNFRSF6/FAS-mediated apoptosis has also a role in the induction of peripheral tolerance. Binds to TNFRSF6B/DcR3, a decoy receptor that blocks apoptosis. Functionally, induces FAS-mediated activation of NF-kappa-B, initiating non-apoptotic signaling pathways. Can induce apoptosis but does not appear to be essential for this process. In terms of biological role, cytoplasmic form induces gene transcription inhibition. The protein is Tumor necrosis factor ligand superfamily member 6 (FASLG) of Macaca fascicularis (Crab-eating macaque).